The chain runs to 222 residues: Germin-like protein subfamily 1 member 14 (222 aa).

An N-terminal signal peptide occupies residues 1 to 22; that stretch reads MRFSKSLILITLSALVISFAEA. The cysteines at positions 32 and 49 are disulfide-linked. Residues 63–214 enclose the Cupin type-1 domain; the sequence is SGLNQAGTTN…AFQLDVNVVK (152 aa). Asn78 is a glycosylation site (N-linked (GlcNAc...) asparagine). Residues His111, His113, Glu118, and His160 each contribute to the Mn(2+) site.

Belongs to the germin family. Oligomer (believed to be a pentamer but probably hexamer).

The protein localises to the secreted. It is found in the extracellular space. The protein resides in the apoplast. Its function is as follows. May play a role in plant defense. Probably has no oxalate oxidase activity even if the active site is conserved. In Arabidopsis thaliana (Mouse-ear cress), this protein is Germin-like protein subfamily 1 member 14.